The following is a 574-amino-acid chain: Sorting nexin-33 (574 aa).

Residues 1–61 enclose the SH3 domain; it reads MALKGRALYD…PASYVEIVRP (61 aa). At Ser-77 the chain carries Phosphoserine. Residues 79–90 show a composition bias toward polar residues; the sequence is GTQGSLYSSPSM. The disordered stretch occupies residues 79 to 116; it reads GTQGSLYSSPSMASPARSGGGSGFLSNPGSFEDDDDDD. Ser-92 is subject to Phosphoserine. Positions 230-340 constitute a PX domain; sequence FACSIEDPTK…HFLSCLDDKQ (111 aa). One can recognise a BAR domain in the interval 371–574; it reads LQDVEDRVDT…EKTLHMYDHL (204 aa).

The protein belongs to the sorting nexin family. Homodimer (via BAR domain). Interacts with ADAM15. Interacts with FASLG. Interacts (via SH3 domain) with DNM1 and DNM2. Interacts with WASL. Interacts with FCHSD1 (via the F-BAR domain). In terms of processing, phosphorylated. As to expression, detected in brain (at protein level).

Its subcellular location is the cytoplasm. The protein localises to the cytosol. It localises to the membrane. The protein resides in the cytoplasmic vesicle membrane. Plays a role in the reorganization of the cytoskeleton, endocytosis and cellular vesicle trafficking via its interactions with membranes, WASL, DNM1 and DNM2. Acts both during interphase and at the end of mitotic cell divisions. Required for efficient progress through mitosis and cytokinesis. Required for normal formation of the cleavage furrow at the end of mitosis. Modulates endocytosis of cell-surface proteins, such as APP and PRNP; this then modulates the secretion of APP and PRNP peptides. Promotes membrane tubulation (in vitro). May promote the formation of macropinosomes. In Mus musculus (Mouse), this protein is Sorting nexin-33 (Snx33).